The following is a 109-amino-acid chain: Putative double-stranded DNA mimic protein YciU (109 aa).

This sequence belongs to the putative dsDNA mimic protein family.

Its function is as follows. May act as a double-stranded DNA (dsDNA) mimic. Probably regulates the activity of a dsDNA-binding protein. In Salmonella arizonae (strain ATCC BAA-731 / CDC346-86 / RSK2980), this protein is Putative double-stranded DNA mimic protein YciU.